The sequence spans 69 residues: Conotoxin Cal12.1p5 (69 aa).

The propeptide occupies 1 to 23 (DLITNSYTRGKPRHVTSWRNLKT).

In terms of processing, contains 4 disulfide bonds. Expressed by the venom duct.

Its subcellular location is the secreted. The sequence is that of Conotoxin Cal12.1p5 from Californiconus californicus (California cone).